The sequence spans 183 residues: Archaemetzincin (183 aa).

Zn(2+) is bound at residue His131. Glu132 serves as the catalytic Proton acceptor. His135, His141, Cys142, Cys147, Cys166, and Cys169 together coordinate Zn(2+).

The protein belongs to the peptidase M54 family. As to quaternary structure, monomer. Requires Zn(2+) as cofactor.

Its function is as follows. Probable zinc metalloprotease whose natural substrate is unknown. In Saccharolobus islandicus (strain Y.N.15.51 / Yellowstone #2) (Sulfolobus islandicus), this protein is Archaemetzincin.